The sequence spans 444 residues: Abhydrolase domain-containing protein abhd-5.2 (444 aa).

The 248-residue stretch at 162–409 (PIVLIHGFGA…SAGHHVYADD (248 aa)) folds into the AB hydrolase-1 domain.

This sequence belongs to the peptidase S33 family. ABHD4/ABHD5 subfamily. In terms of assembly, interacts with atgl-1; the interaction tethers atgl-1 to lipid droplets. Expressed in the hypodermis and intestine.

The protein localises to the lipid droplet. Functionally, acts coordinately with phospholipase atgl-1 within the lipolytic cascade to distribute stored energy to tissues to maintain energy levels during the dauer phase. Localizes atgl-1 to lipid droplets, possibly to facilitate triglyceride hydrolysis. Regulates lipid droplet size, lipid content, the exchange of lipids between lipid droplets and fusion of lipid droplets during the dauer phase. This is Abhydrolase domain-containing protein abhd-5.2 from Caenorhabditis elegans.